The primary structure comprises 212 residues: Uridine kinase (212 aa).

13 to 20 is an ATP binding site; it reads GASASGKS.

It belongs to the uridine kinase family.

The protein localises to the cytoplasm. It carries out the reaction uridine + ATP = UMP + ADP + H(+). It catalyses the reaction cytidine + ATP = CMP + ADP + H(+). Its pathway is pyrimidine metabolism; CTP biosynthesis via salvage pathway; CTP from cytidine: step 1/3. It functions in the pathway pyrimidine metabolism; UMP biosynthesis via salvage pathway; UMP from uridine: step 1/1. This chain is Uridine kinase, found in Shewanella baltica (strain OS155 / ATCC BAA-1091).